We begin with the raw amino-acid sequence, 763 residues long: Phosphoglycerol transferase I (763 aa).

4 helical membrane passes run 1–21 (MSEL…AWKA), 24–44 (NTWW…LNIT), 77–97 (ILPG…LGWI), and 108–128 (VGYS…SPAF).

Belongs to the OpgB family.

The protein resides in the cell inner membrane. It carries out the reaction a phosphatidylglycerol + a membrane-derived-oligosaccharide D-glucose = a 1,2-diacyl-sn-glycerol + a membrane-derived-oligosaccharide 6-(glycerophospho)-D-glucose.. It participates in glycan metabolism; osmoregulated periplasmic glucan (OPG) biosynthesis. Its function is as follows. Transfers a phosphoglycerol residue from phosphatidylglycerol to the membrane-bound nascent glucan backbones. This chain is Phosphoglycerol transferase I, found in Salmonella arizonae (strain ATCC BAA-731 / CDC346-86 / RSK2980).